Here is a 255-residue protein sequence, read N- to C-terminus: 1-(5-phosphoribosyl)-5-[(5-phosphoribosylamino)methylideneamino] imidazole-4-carboxamide isomerase (255 aa).

D8 acts as the Proton acceptor in catalysis. The active-site Proton donor is D129.

It belongs to the HisA/HisF family.

It is found in the cytoplasm. The enzyme catalyses 1-(5-phospho-beta-D-ribosyl)-5-[(5-phospho-beta-D-ribosylamino)methylideneamino]imidazole-4-carboxamide = 5-[(5-phospho-1-deoxy-D-ribulos-1-ylimino)methylamino]-1-(5-phospho-beta-D-ribosyl)imidazole-4-carboxamide. Its pathway is amino-acid biosynthesis; L-histidine biosynthesis; L-histidine from 5-phospho-alpha-D-ribose 1-diphosphate: step 4/9. The sequence is that of 1-(5-phosphoribosyl)-5-[(5-phosphoribosylamino)methylideneamino] imidazole-4-carboxamide isomerase from Prochlorococcus marinus (strain MIT 9515).